A 175-amino-acid chain; its full sequence is MNYFALFNLTPSFDVDKAALAATYQQLQKLTHPDRFATASERDKLIALQKNAQVNDGYQVLKTPLSRAEHMLELRGVELQHEQKTMQDGAFLMQQMEWREQLDDAQHASDPLTALESLDDEVAADIKRLLSELGGFLEQSDDAANENAANLVRKLKFLFKLRHEIEIKEDALSDF.

The 75-residue stretch at N2–G76 folds into the J domain.

It belongs to the HscB family. Interacts with HscA and stimulates its ATPase activity.

Its function is as follows. Co-chaperone involved in the maturation of iron-sulfur cluster-containing proteins. Seems to help targeting proteins to be folded toward HscA. This Pseudoalteromonas atlantica (strain T6c / ATCC BAA-1087) protein is Co-chaperone protein HscB homolog.